Reading from the N-terminus, the 1191-residue chain is Solute carrier family 12 member 2 (1191 aa).

A disordered region spans residues 1–166 (MEPAFPASSA…MSEGSLHSSG (166 aa)). At 1-258 (MEPAFPASSA…ADNKGVVKFG (258 aa)) the chain is on the cytoplasmic side. 4 stretches are compositionally biased toward low complexity: residues 13-25 (QSQS…AGQQ), 59-69 (KGQTAAQPAAA), 80-99 (AAAP…AAAA), and 131-141 (SASSAHGGHQP). Residues 142–155 (PSESMNGYPQNGDT) are compositionally biased toward polar residues. Residues Thr175, Thr179, and Thr184 each carry the phosphothreonine; by OXSR1 and STK39 modification. Phosphothreonine is present on residues Thr189 and Thr202. A discontinuously helical membrane pass occupies residues 259 to 288 (WIKGVLVRCMLNIWGVMLFIRLSWIVGHAG). Leu269 provides a ligand contact to Na(+). 2 residues coordinate K(+): Asn270 and Ile271. Trp272 provides a ligand contact to Na(+). Chloride contacts are provided by Gly273, Val274, and Met275. Residues 289 to 308 (IGLALLVIGTATVVTTITGL) form a helical membrane-spanning segment. Over 309–339 (STSAITTNGFVRGGGAYYLISRSLGPEFGGA) the chain is Cytoplasmic. Residues 340 to 367 (IGLIFAFANAVAVAMYVVGFAETVRDLL) form a helical membrane-spanning segment. Phe344 serves as a coordination point for chloride. A K(+)-binding site is contributed by Tyr355. At 368-377 (VEHNALMIDE) the chain is on the extracellular side. The helical transmembrane segment at 378–401 (MSDIRIIGSVTIVVLFGISVAGME) threads the bilayer. Residues 402–404 (WEA) lie on the Cytoplasmic side of the membrane. The helical transmembrane segment at 405–426 (KAQIVLLGILLLAIVNFTVGTF) threads the bilayer. At 427-458 (IPANDKRAKGFFNYRGEIFSENFVPDFRDGED) the chain is on the extracellular side. Residues 459–476 (FFSVFAIFFPAATGILAG) form a discontinuously helical membrane-spanning segment. 3 residues coordinate K(+): Pro468, Ala469, and Thr471. Positions 468 and 469 each coordinate chloride. Chloride-binding residues include Gly472 and Ile473. Over 477–491 (ANISGDLADPQLAIP) the chain is Cytoplasmic. The helical transmembrane segment at 492 to 513 (KGTLLAILITTIVYAGAAVSVG) threads the bilayer. Residues 514–571 (SCIVREATGNLTDAIIPGTVTNCTNVACKLGFNFSSCATNKCSYGLMNDFQVMSLVSG) lie on the Extracellular side of the membrane. 2 N-linked (GlcNAc...) asparagine glycosylation sites follow: Asn523 and Asn535. Cys536 and Cys541 are oxidised to a cystine. Asn546 is a glycosylation site (N-linked (GlcNAc...) asparagine). Cys550 and Cys555 are oxidised to a cystine. Residues 572–596 (FGPLITAGIFSATLSSALASLVSAP) traverse the membrane as a helical segment. 3 residues coordinate Na(+): Ala583, Ser586, and Ser587. Residues 597 to 624 (KIFQALCKDNIYPGLHVFSVGYGKNNEP) lie on the Cytoplasmic side of the membrane. 2 helical membrane-spanning segments follow: residues 625–645 (LRGY…AELN) and 646–664 (VIAP…LINF). 2 residues coordinate chloride: Phe655 and Tyr659. At 665–687 (SVFHASLAKSPGWRPAFRFYNMW) the chain is on the cytoplasmic side. The next 2 helical transmembrane spans lie at 688 to 705 (ISLI…VINW) and 706 to 718 (WAAL…VLAL). Over 719–1191 (YIYVTYKKPD…NHQSVLTFYS (473 aa)) the chain is Cytoplasmic. Residues 734 to 751 (STQALTYLNALQHAIRLT) form a scissor helix region. The interval 929–972 (HSDADSSKPSSKSVSETNSPAVCQDQKDEEDDGKASTQPLLKKE) is disordered. The span at 935–948 (SKPSSKSVSETNSP) shows a compositional bias: low complexity. Thr1114 is subject to Phosphothreonine.

The protein belongs to the SLC12A transporter family. Homodimer. Post-translationally, phosphorylated at Thr-175, Thr-179 and Thr-184 by OXSR1/OSR1 and STK39/SPAK downstream of WNK kinases (WNK1, WNK2, WNK3 or WNK4), promoting its activity. In terms of tissue distribution, strongly expressed in rectal gland, brain, gill and intestine. Also detected at lower levels in heart, kidney, and testis.

Its subcellular location is the basolateral cell membrane. It carries out the reaction K(+)(out) + 2 chloride(out) + Na(+)(out) = K(+)(in) + 2 chloride(in) + Na(+)(in). Activated following phosphorylation by OXSR1/OSR1 and STK39/SPAK. Inhibited by bumetanide. Its function is as follows. Cation-chloride cotransporter which mediates the electroneutral transport of chloride, potassium and/or sodium ions across the membrane. Plays a vital role in the regulation of ionic balance and cell volume. The polypeptide is Solute carrier family 12 member 2 (SLC12A2) (Squalus acanthias (Spiny dogfish)).